The following is a 296-amino-acid chain: Phosphoribosylaminoimidazole-succinocarboxamide synthase (296 aa).

Belongs to the SAICAR synthetase family.

The catalysed reaction is 5-amino-1-(5-phospho-D-ribosyl)imidazole-4-carboxylate + L-aspartate + ATP = (2S)-2-[5-amino-1-(5-phospho-beta-D-ribosyl)imidazole-4-carboxamido]succinate + ADP + phosphate + 2 H(+). It functions in the pathway purine metabolism; IMP biosynthesis via de novo pathway; 5-amino-1-(5-phospho-D-ribosyl)imidazole-4-carboxamide from 5-amino-1-(5-phospho-D-ribosyl)imidazole-4-carboxylate: step 1/2. In Geobacter sulfurreducens (strain ATCC 51573 / DSM 12127 / PCA), this protein is Phosphoribosylaminoimidazole-succinocarboxamide synthase.